The following is a 319-amino-acid chain: Structure-specific endonuclease subunit SLX1 (319 aa).

A GIY-YIG domain is found at 20-103 (TFYCCYLLQS…QHGYKTHYIP (84 aa)). The SLX1-type zinc finger occupies 233 to 297 (CNLCGQCYDY…LPNFCMCPGC (65 aa)).

The protein belongs to the SLX1 family. As to quaternary structure, forms a heterodimer with SLX4. The cofactor is a divalent metal cation.

It localises to the nucleus. In terms of biological role, catalytic subunit of the SLX1-SLX4 structure-specific endonuclease that resolves DNA secondary structures generated during DNA repair and recombination. Has endonuclease activity towards branched DNA substrates, introducing single-strand cuts in duplex DNA close to junctions with ss-DNA. The protein is Structure-specific endonuclease subunit SLX1 of Vanderwaltozyma polyspora (strain ATCC 22028 / DSM 70294 / BCRC 21397 / CBS 2163 / NBRC 10782 / NRRL Y-8283 / UCD 57-17) (Kluyveromyces polysporus).